The chain runs to 109 residues: Parvalbumin beta 2 (109 aa).

A2 is subject to N-acetylalanine. EF-hand domains are found at residues 39–74 (KSPADIKKVFEIIDQDKSDFVEEDELKLFLQNFSAG) and 78–109 (LSDAETKVFLKAGDSDGDGKIGVDEFGAMIKA). The Ca(2+) site is built by D52, D54, S56, F58, E60, E63, D91, D93, D95, K97, and E102.

The protein belongs to the parvalbumin family. Monomer.

In terms of biological role, in muscle, parvalbumin is thought to be involved in relaxation after contraction. It binds two calcium ions. This is Parvalbumin beta 2 from Gadus morhua (Atlantic cod).